A 290-amino-acid polypeptide reads, in one-letter code: Type II secretion system protein C (290 aa).

Residues 1–28 (MTLPFRDDLLSSLLARCKTVPLSRFSQP) are Cytoplasmic-facing. Residues 29–46 (LFWLLLLLLAHQCAGLTW) traverse the membrane as a helical segment. Residues 47–290 (RLLDLGSQQS…LYDVYVGLSE (244 aa)) are Periplasmic-facing.

It belongs to the GSP C family.

It localises to the cell inner membrane. Its function is as follows. Involved in a type II secretion system (T2SS, formerly general secretion pathway, GSP) for the export of proteins. The chain is Type II secretion system protein C (exeC) from Aeromonas salmonicida.